Here is a 507-residue protein sequence, read N- to C-terminus: Maturase K (507 aa).

This sequence belongs to the intron maturase 2 family. MatK subfamily.

It is found in the plastid. The protein resides in the chloroplast. Its function is as follows. Usually encoded in the trnK tRNA gene intron. Probably assists in splicing its own and other chloroplast group II introns. This is Maturase K from Asimina triloba (Pawpaw).